The primary structure comprises 206 residues: Thymidylate kinase (206 aa).

10–17 serves as a coordination point for ATP; that stretch reads GVDGVGKT.

It belongs to the thymidylate kinase family.

The enzyme catalyses dTMP + ATP = dTDP + ADP. In terms of biological role, phosphorylation of dTMP to form dTDP in both de novo and salvage pathways of dTTP synthesis. The chain is Thymidylate kinase from Bifidobacterium longum (strain NCC 2705).